The chain runs to 490 residues: MVPVIALVGRPNVGKSTLFNRLTRTRDAIVGDLSGLTRDRQYGEAKWQGRTYILIDTGGISGDEHGMDEKMAEQSLLAIEEADVVLFLVDAKAGFTAADQMIGEHLRKRNKTSYVIANKVDNIDPDMARAEFAPLGMGDAIPIAGAHGRGITQMLEIALSEFPKDDADEPEEGEEEIVAEGEEAKRIPGPSEKDGIKIAIIGRPNVGKSTLVNRMLGEDRVIVYDQPGTTRDSIYIPFERNDEKYTLIDTAGVRKRGKIHEEVEKFSVVKTLQAIKDANVVIFVMDAREGVVDHDLNLLGFALEAGRALVIALNKWDGMQPSERDYVKTELQRRLFFVDFADIHFISALHGTGVGNLYQSVQNSFKSAVTRWPTSRLTQILEDAVGEHAPPMVNNRRIKLRYAHLGGANPPLIVIHGNQVEKVPKSYVRYLENTYRRVLKLVGTPIRIEFKGGENPYEGNKNTLTDRQVNKKRRLMSHHKKADKKRRDKR.

The 164-residue stretch at 3–166 folds into the EngA-type G 1 domain; the sequence is PVIALVGRPN…IALSEFPKDD (164 aa). GTP-binding positions include 9-16, 56-60, and 118-121; these read GRPNVGKS, DTGGI, and NKVD. Positions 164–191 are disordered; sequence KDDADEPEEGEEEIVAEGEEAKRIPGPS. The span at 166–181 shows a compositional bias: acidic residues; the sequence is DADEPEEGEEEIVAEG. Positions 182-191 are enriched in basic and acidic residues; sequence EEAKRIPGPS. Residues 196–369 form the EngA-type G 2 domain; sequence IKIAIIGRPN…SVQNSFKSAV (174 aa). GTP contacts are provided by residues 202–209, 249–253, and 314–317; these read GRPNVGKS, DTAGV, and NKWD. Positions 370 to 454 constitute a KH-like domain; the sequence is TRWPTSRLTQ…PIRIEFKGGE (85 aa). The tract at residues 452–490 is disordered; it reads GGENPYEGNKNTLTDRQVNKKRRLMSHHKKADKKRRDKR. A compositionally biased stretch (basic residues) spans 470 to 490; the sequence is NKKRRLMSHHKKADKKRRDKR.

It belongs to the TRAFAC class TrmE-Era-EngA-EngB-Septin-like GTPase superfamily. EngA (Der) GTPase family. As to quaternary structure, associates with the 50S ribosomal subunit.

Functionally, GTPase that plays an essential role in the late steps of ribosome biogenesis. This is GTPase Der from Pseudomonas fluorescens (strain ATCC BAA-477 / NRRL B-23932 / Pf-5).